The chain runs to 352 residues: Ferrochelatase (352 aa).

The Fe cation site is built by histidine 222 and glutamate 303.

This sequence belongs to the ferrochelatase family.

It is found in the cytoplasm. The catalysed reaction is heme b + 2 H(+) = protoporphyrin IX + Fe(2+). The protein operates within porphyrin-containing compound metabolism; protoheme biosynthesis; protoheme from protoporphyrin-IX: step 1/1. In terms of biological role, catalyzes the ferrous insertion into protoporphyrin IX. The protein is Ferrochelatase of Brucella abortus (strain S19).